Consider the following 235-residue polypeptide: UPF0714 protein YmaC (235 aa).

The helical transmembrane segment at 5–24 (LLNVILVLAIVLFLRYVHYS) threads the bilayer.

It belongs to the UPF0714 family.

It localises to the cell membrane. The polypeptide is UPF0714 protein YmaC (ymaC) (Bacillus subtilis (strain 168)).